The following is a 394-amino-acid chain: Elongation factor Tu (394 aa).

A tr-type G domain is found at 10–204; the sequence is KPHVNVGTIG…ALDTYIPEPE (195 aa). Residues 19-26 are G1; the sequence is GHVDHGKT. 19–26 is a binding site for GTP; the sequence is GHVDHGKT. Residue T26 participates in Mg(2+) binding. A G2 region spans residues 60–64; it reads GITIN. The segment at 81–84 is G3; the sequence is DCPG. GTP is bound by residues 81 to 85 and 136 to 139; these read DCPGH and NKCD. The G4 stretch occupies residues 136–139; that stretch reads NKCD. A G5 region spans residues 174–176; sequence SAL.

This sequence belongs to the TRAFAC class translation factor GTPase superfamily. Classic translation factor GTPase family. EF-Tu/EF-1A subfamily. Monomer.

It is found in the cytoplasm. It carries out the reaction GTP + H2O = GDP + phosphate + H(+). In terms of biological role, GTP hydrolase that promotes the GTP-dependent binding of aminoacyl-tRNA to the A-site of ribosomes during protein biosynthesis. The sequence is that of Elongation factor Tu from Shewanella pealeana (strain ATCC 700345 / ANG-SQ1).